We begin with the raw amino-acid sequence, 233 residues long: MSVISMKQLLEAGVHFGHQTRRWNPKMKRYIFTERNGIYIIDLQKTVKKVEEAYRTMRDIAAEGGDILFVGTKKQAQEAIKEEATRAGMYFVNQRWLGGTLTNFQTIQKRIKRLKDIERMQEDGTFEVLPKKEVVQLKKELERLEKFLGGIKDMKGLPSALFVVDPRKERIAVAEARKLHIPIIGIVDTNCDPDEIDHVIPANDDAIRAVKLLTSKMADAILEAKQGEETVTA.

It belongs to the universal ribosomal protein uS2 family.

The chain is Small ribosomal subunit protein uS2 from Bacillus cereus (strain G9842).